The primary structure comprises 399 residues: Transcription termination factor 1, mitochondrial (399 aa).

Residues 1–57 constitute a mitochondrion transit peptide; sequence MQSLSLGQTSISKGLNYLTIMAPGNLWHMRNNFLFGSRCWMTRFSAENIFKSVSFRL. Interaction with DNA stretches follow at residues 169 to 170, 247 to 251, 324 to 331, 355 to 358, and 384 to 391; these read RS, QSTKR, AEKKFNDK, SIST, and SKKRYEAK.

The protein belongs to the mTERF family. In terms of assembly, monomer. Post-translationally, phosphoprotein with mostly four phosphate groups. While the DNA-binding activity is unaffected by the phosphorylation state, only the phosphorylated form of the protein is active for termination activity. Functioning seems to be regulated by phosphorylation.

The protein localises to the mitochondrion. Transcription termination factor. Binds to a 28 bp region within the tRNA(Leu(uur)) gene at a position immediately adjacent to and downstream of the 16S rRNA gene; this region comprises a tridecamer sequence critical for directing accurate termination. Binds DNA along the major grove and promotes DNA bending and partial unwinding. Promotes base flipping. Transcription termination activity appears to be polarized with highest specificity for transcripts initiated on the light strand. The protein is Transcription termination factor 1, mitochondrial (MTERF1) of Homo sapiens (Human).